We begin with the raw amino-acid sequence, 262 residues long: Homeobox protein Nkx-6.3 (262 aa).

A DNA-binding region (homeobox) is located at residues 140-199 (KKHTRPTFTGHQIFALEKTFEQTKYLAGPERARLAYSLGMTESQVKVWFQNRRTKWRKKS). The segment at 197 to 237 (KKSALEPSSSTPRAPGGASGDRAASENEDDEYNKPLDPDSD) is disordered.

Expressed in the developing CNS and gastro-intestinal tract.

The protein resides in the nucleus. Functionally, putative transcription factor, which may be involved in patterning of central nervous system and pancreas. The sequence is that of Homeobox protein Nkx-6.3 (Nkx6-3) from Mus musculus (Mouse).